The sequence spans 151 residues: Large ribosomal subunit protein bL9 (151 aa).

It belongs to the bacterial ribosomal protein bL9 family.

Its function is as follows. Binds to the 23S rRNA. This chain is Large ribosomal subunit protein bL9, found in Mycobacteroides abscessus (strain ATCC 19977 / DSM 44196 / CCUG 20993 / CIP 104536 / JCM 13569 / NCTC 13031 / TMC 1543 / L948) (Mycobacterium abscessus).